The following is a 165-amino-acid chain: UPF0254 protein MMP0935 (165 aa).

The protein belongs to the UPF0254 family.

This chain is UPF0254 protein MMP0935, found in Methanococcus maripaludis (strain DSM 14266 / JCM 13030 / NBRC 101832 / S2 / LL).